The sequence spans 198 residues: Large ribosomal subunit protein uL24c (198 aa).

A chloroplast-targeting transit peptide spans 1-50 (MATMSALQSSFTSLSLSPSSSFLGQRLISPISLSVTSPVKPAENPCLVLA).

This sequence belongs to the universal ribosomal protein uL24 family. In terms of assembly, part of the 50S ribosomal subunit.

The protein resides in the plastid. Its subcellular location is the chloroplast. One of two assembly initiator proteins, it binds directly to the 5'-end of the 23S rRNA, where it nucleates assembly of the 50S subunit. Required for optimal plastid performance in terms of photosynthesis and growth. Required for the translation of plastid mRNAs. Plays a critical role in biosynthesis of thylakoid membrane proteins encoded by chloroplast genes. In Arabidopsis thaliana (Mouse-ear cress), this protein is Large ribosomal subunit protein uL24c (RPL24).